Here is a 206-residue protein sequence, read N- to C-terminus: 7-methyl-GTP pyrophosphatase (206 aa).

Asp-82 (proton acceptor) is an active-site residue.

Belongs to the Maf family. YceF subfamily. The cofactor is a divalent metal cation.

The protein resides in the cytoplasm. It carries out the reaction N(7)-methyl-GTP + H2O = N(7)-methyl-GMP + diphosphate + H(+). In terms of biological role, nucleoside triphosphate pyrophosphatase that hydrolyzes 7-methyl-GTP (m(7)GTP). May have a dual role in cell division arrest and in preventing the incorporation of modified nucleotides into cellular nucleic acids. This Shewanella denitrificans (strain OS217 / ATCC BAA-1090 / DSM 15013) protein is 7-methyl-GTP pyrophosphatase.